The following is a 458-amino-acid chain: Exodeoxyribonuclease 7 large subunit (458 aa).

Belongs to the XseA family. In terms of assembly, heterooligomer composed of large and small subunits.

The protein localises to the cytoplasm. The enzyme catalyses Exonucleolytic cleavage in either 5'- to 3'- or 3'- to 5'-direction to yield nucleoside 5'-phosphates.. Bidirectionally degrades single-stranded DNA into large acid-insoluble oligonucleotides, which are then degraded further into small acid-soluble oligonucleotides. The sequence is that of Exodeoxyribonuclease 7 large subunit from Geobacter sp. (strain M21).